A 24-amino-acid polypeptide reads, in one-letter code: Coenzyme PQQ synthesis protein A (24 aa).

Residues 16 to 20 (EITMY) constitute a cross-link (pyrroloquinoline quinone (Glu-Tyr)).

This sequence belongs to the PqqA family.

It functions in the pathway cofactor biosynthesis; pyrroloquinoline quinone biosynthesis. Functionally, required for coenzyme pyrroloquinoline quinone (PQQ) biosynthesis. PQQ is probably formed by cross-linking a specific glutamate to a specific tyrosine residue and excising these residues from the peptide. The chain is Coenzyme PQQ synthesis protein A from Burkholderia cenocepacia (strain ATCC BAA-245 / DSM 16553 / LMG 16656 / NCTC 13227 / J2315 / CF5610) (Burkholderia cepacia (strain J2315)).